The sequence spans 753 residues: Inactive protein-tyrosine phosphatase egg-4 (753 aa).

Disordered stretches follow at residues 26 to 46 (TSLQ…STDN) and 75 to 145 (SFRK…SGHG). A compositionally biased stretch (low complexity) spans 35-46 (NTDDSSADSTDN). Composition is skewed to basic and acidic residues over residues 84 to 94 (AQKDRRSKERL) and 129 to 145 (VSEK…SGHG). In terms of domain architecture, Tyrosine-protein phosphatase spans 408–661 (MERRFEILEN…IFVHRLVAFF (254 aa)).

The protein belongs to the protein-tyrosine phosphatase family. As to quaternary structure, part of a complex, consisting of pseudophosphatases egg-3, egg-4, egg-5 and kinase mbk-2; this complex is required for the oocyte-to-zygote transition. Interacts (via tyrosine-protein phosphatase domain) with kinase mbk-2 (via 'Tyr-619' and 'Tyr-621'); mbk-2 tyrosine phosphorylation enhances the interaction. The interaction inhibits mbk-2 kinase activity and is required for mbk-2 oocyte cortex localization. Interacts with egg-3.

Its subcellular location is the cytoplasm. The protein localises to the cell cortex. In terms of biological role, inactive phosphatase which acts redundantly with egg-5 in the oocyte-to-zygote transition. Required for the polarization of cortical actin cytoskeleton rearrangement in the oocyte before and after fertilization. Together with egg-5, required for the cortical localization of kinase mbk-2 and for the inhibition of mbk-2 kinase activity in maturing oocyte until the end of meiosis I. Also required for kinase mbk-2, pseudophosphatase egg-3 and chitin synthase chs-1 localization to cytoplasmic foci after fertilization. The chain is Inactive protein-tyrosine phosphatase egg-4 from Caenorhabditis elegans.